Reading from the N-terminus, the 675-residue chain is Methionine--tRNA ligase (675 aa).

Residues 15–25 carry the 'HIGH' region motif; it reads PYANGSIHLGH. Zn(2+)-binding residues include Cys146, Cys149, Cys159, and Cys162. Residues 332-336 carry the 'KMSKS' region motif; that stretch reads KMSKS. Lys335 contributes to the ATP binding site. In terms of domain architecture, tRNA-binding spans 573–675; sequence DFAKVDMRIA…SGAQPGMQVK (103 aa).

It belongs to the class-I aminoacyl-tRNA synthetase family. MetG type 1 subfamily. In terms of assembly, homodimer. Requires Zn(2+) as cofactor.

The protein resides in the cytoplasm. The catalysed reaction is tRNA(Met) + L-methionine + ATP = L-methionyl-tRNA(Met) + AMP + diphosphate. Its function is as follows. Is required not only for elongation of protein synthesis but also for the initiation of all mRNA translation through initiator tRNA(fMet) aminoacylation. This Yersinia pestis bv. Antiqua (strain Angola) protein is Methionine--tRNA ligase.